We begin with the raw amino-acid sequence, 201 residues long: ATP-dependent Clp protease proteolytic subunit (201 aa).

Ser105 serves as the catalytic Nucleophile. His130 is an active-site residue.

It belongs to the peptidase S14 family. As to quaternary structure, fourteen ClpP subunits assemble into 2 heptameric rings which stack back to back to give a disk-like structure with a central cavity, resembling the structure of eukaryotic proteasomes.

The protein localises to the cytoplasm. The enzyme catalyses Hydrolysis of proteins to small peptides in the presence of ATP and magnesium. alpha-casein is the usual test substrate. In the absence of ATP, only oligopeptides shorter than five residues are hydrolyzed (such as succinyl-Leu-Tyr-|-NHMec, and Leu-Tyr-Leu-|-Tyr-Trp, in which cleavage of the -Tyr-|-Leu- and -Tyr-|-Trp bonds also occurs).. In terms of biological role, cleaves peptides in various proteins in a process that requires ATP hydrolysis. Has a chymotrypsin-like activity. Plays a major role in the degradation of misfolded proteins. The sequence is that of ATP-dependent Clp protease proteolytic subunit from Aquifex aeolicus (strain VF5).